The primary structure comprises 281 residues: Putrescine transport system permease protein PotI (281 aa).

Residues 1 to 13 (MNNLPVVRSPWRI) lie on the Cytoplasmic side of the membrane. Residues 14 to 33 (VILLLGFTFLYAPMLMLVIY) traverse the membrane as a helical segment. At 34 to 68 (SFNSSKLVTVWAGWSTRWYGELLRDDAMMSAVGLS) the chain is on the periplasmic side. The ABC transmembrane type-1 domain maps to 65-260 (VGLSLTIAAC…GAVGIVGFIA (196 aa)). A helical membrane pass occupies residues 69–88 (LTIAACAATAAAILGTIAAV). Residues 89-115 (VLVRFGRFRGSNGFAFMITAPLVMPDV) lie on the Cytoplasmic side of the membrane. The chain crosses the membrane as a helical span at residues 116 to 135 (ITGLSLLLLFVALAHAIGWP). The Periplasmic segment spans residues 136–140 (ADRGM). Residues 141 to 160 (LTIWLAHVTFCTAYVAVVIS) form a helical membrane-spanning segment. Over 161-186 (SRLRELDRSIEEAAMDLGATPLKVFF) the chain is Cytoplasmic. The helical transmembrane segment at 187-206 (VITLPMIMPAIISGWLLAFT) threads the bilayer. Over 207–243 (LSLDDLVIASFVSGPGATTLPMLVFSSVRMGVNPEIN) the chain is Periplasmic. Residues 244–263 (ALATLILGAVGIVGFIAWYL) traverse the membrane as a helical segment. Over 264–281 (MARAEKQRIRDIQRARRG) the chain is Cytoplasmic.

It belongs to the binding-protein-dependent transport system permease family. CysTW subfamily. In terms of assembly, the complex is composed of two ATP-binding proteins (PotG), two transmembrane proteins (PotH and PotI) and a solute-binding protein (PotF).

It localises to the cell inner membrane. Its function is as follows. Part of the ABC transporter complex PotFGHI involved in putrescine uptake. Responsible for the translocation of the substrate across the membrane. This is Putrescine transport system permease protein PotI from Escherichia coli O6:H1 (strain CFT073 / ATCC 700928 / UPEC).